A 211-amino-acid chain; its full sequence is Protein crossbronx-like (211 aa).

In terms of domain architecture, UBC core spans 17–177 (NQGYQILAEY…VRNSILWSCK (161 aa)).

Belongs to the ubiquitin-conjugating enzyme family. FTS subfamily.

In Drosophila grimshawi (Hawaiian fruit fly), this protein is Protein crossbronx-like.